The sequence spans 288 residues: Energy-coupling factor transporter ATP-binding protein EcfA2 (288 aa).

Residues 2-244 (IKFEKVNYTY…VDFLKAHELG (243 aa)) enclose the ABC transporter domain. 39–46 (GHTGSGKS) is a binding site for ATP. E170 functions as the Proton acceptor in the catalytic mechanism.

It belongs to the ABC transporter superfamily. Energy-coupling factor EcfA family. As to quaternary structure, forms a stable energy-coupling factor (ECF) transporter complex composed of 2 membrane-embedded substrate-binding proteins (S component), 2 ATP-binding proteins (A component) and 2 transmembrane proteins (T component). In L.lactis forms a stable complex with EcfA' and EcfT and substrate-binding components. In E.coli forms a stable complex with EcfA, EcfT and individually with 3 tested substrate-binding components (BioY, NiaX and ThiT) with a stoichiometry of 1.1:1:1. The core ECF complex interacts with a number of substrate-specific binding components, including BioY, BioY2, HmpT, NiaX, PanT, QueT, RibU and ThiT.

Its subcellular location is the cell membrane. ATP-binding (A) component of a common energy-coupling factor (ECF) ABC-transporter complex. Unlike classic ABC transporters this ECF transporter provides the energy necessary to transport a number of different substrates. In this organism these probably include biotin, thiamine precursor, niacin, pantothenic acid, queuosine precursor, riboflavin and thiamine. Uptake of niacin or riboflavin into proteosomes containing EcfA1A2T and Niax or RibU has been demonstrated. Uptake requires hydrolyzable Mg-ATP and is substrate-specific; NiaX-containing proteosomes did not transport riboflavin. The polypeptide is Energy-coupling factor transporter ATP-binding protein EcfA2 (Lactococcus lactis subsp. cremoris (strain MG1363)).